A 236-amino-acid chain; its full sequence is Purine nucleoside phosphorylase DeoD-type (236 aa).

H4 contributes to the a purine D-ribonucleoside binding site. Phosphate contacts are provided by residues G20, R24, R43, and 87 to 90; that span reads RVGS. A purine D-ribonucleoside contacts are provided by residues 179–181 and 203–204; these read EME and SD. D204 serves as the catalytic Proton donor.

It belongs to the PNP/UDP phosphorylase family. In terms of assembly, homohexamer; trimer of homodimers.

The catalysed reaction is a purine D-ribonucleoside + phosphate = a purine nucleobase + alpha-D-ribose 1-phosphate. It carries out the reaction a purine 2'-deoxy-D-ribonucleoside + phosphate = a purine nucleobase + 2-deoxy-alpha-D-ribose 1-phosphate. Its function is as follows. Catalyzes the reversible phosphorolytic breakdown of the N-glycosidic bond in the beta-(deoxy)ribonucleoside molecules, with the formation of the corresponding free purine bases and pentose-1-phosphate. The sequence is that of Purine nucleoside phosphorylase DeoD-type from Limosilactobacillus reuteri (strain DSM 20016) (Lactobacillus reuteri).